The following is a 172-amino-acid chain: 3-hydroxydecanoyl-[acyl-carrier-protein] dehydratase (172 aa).

His-71 is an active-site residue.

The protein belongs to the thioester dehydratase family. FabA subfamily. Homodimer.

It localises to the cytoplasm. The enzyme catalyses a (3R)-hydroxyacyl-[ACP] = a (2E)-enoyl-[ACP] + H2O. It catalyses the reaction (3R)-hydroxydecanoyl-[ACP] = (2E)-decenoyl-[ACP] + H2O. The catalysed reaction is (2E)-decenoyl-[ACP] = (3Z)-decenoyl-[ACP]. It functions in the pathway lipid metabolism; fatty acid biosynthesis. Necessary for the introduction of cis unsaturation into fatty acids. Catalyzes the dehydration of (3R)-3-hydroxydecanoyl-ACP to E-(2)-decenoyl-ACP and then its isomerization to Z-(3)-decenoyl-ACP. Can catalyze the dehydratase reaction for beta-hydroxyacyl-ACPs with saturated chain lengths up to 16:0, being most active on intermediate chain length. In Erwinia tasmaniensis (strain DSM 17950 / CFBP 7177 / CIP 109463 / NCPPB 4357 / Et1/99), this protein is 3-hydroxydecanoyl-[acyl-carrier-protein] dehydratase.